We begin with the raw amino-acid sequence, 131 residues long: Global transcriptional regulator Spx (131 aa).

A disulfide bond links Cys-10 and Cys-13.

The protein belongs to the ArsC family. Spx subfamily. Interacts with the C-terminal domain of the alpha subunit of the RNAP.

The protein localises to the cytoplasm. Functionally, global transcriptional regulator that plays a key role in stress response and exerts either positive or negative regulation of genes. Acts by interacting with the C-terminal domain of the alpha subunit of the RNA polymerase (RNAP). This interaction can enhance binding of RNAP to the promoter region of target genes and stimulate their transcription, or block interaction of RNAP with activator. The chain is Global transcriptional regulator Spx from Staphylococcus epidermidis (strain ATCC 35984 / DSM 28319 / BCRC 17069 / CCUG 31568 / BM 3577 / RP62A).